We begin with the raw amino-acid sequence, 274 residues long: 4-deoxy-L-threo-5-hexosulose-uronate ketol-isomerase (274 aa).

Residues His192, His194, Glu199, and His241 each contribute to the Zn(2+) site.

This sequence belongs to the KduI family. It depends on Zn(2+) as a cofactor.

The catalysed reaction is 5-dehydro-4-deoxy-D-glucuronate = 3-deoxy-D-glycero-2,5-hexodiulosonate. The protein operates within glycan metabolism; pectin degradation; 2-dehydro-3-deoxy-D-gluconate from pectin: step 4/5. In terms of biological role, catalyzes the isomerization of 5-dehydro-4-deoxy-D-glucuronate to 3-deoxy-D-glycero-2,5-hexodiulosonate. The protein is 4-deoxy-L-threo-5-hexosulose-uronate ketol-isomerase of Cereibacter sphaeroides (strain ATCC 17029 / ATH 2.4.9) (Rhodobacter sphaeroides).